The sequence spans 86 residues: Small ribosomal subunit protein bS16 (86 aa).

Belongs to the bacterial ribosomal protein bS16 family.

This Acidithiobacillus ferrooxidans (strain ATCC 23270 / DSM 14882 / CIP 104768 / NCIMB 8455) (Ferrobacillus ferrooxidans (strain ATCC 23270)) protein is Small ribosomal subunit protein bS16.